The following is a 131-amino-acid chain: Small ribosomal subunit protein uS11 (131 aa).

It belongs to the universal ribosomal protein uS11 family. As to quaternary structure, part of the 30S ribosomal subunit. Interacts with proteins S7 and S18. Binds to IF-3.

Its function is as follows. Located on the platform of the 30S subunit, it bridges several disparate RNA helices of the 16S rRNA. Forms part of the Shine-Dalgarno cleft in the 70S ribosome. The sequence is that of Small ribosomal subunit protein uS11 from Saccharophagus degradans (strain 2-40 / ATCC 43961 / DSM 17024).